We begin with the raw amino-acid sequence, 374 residues long: Beta sliding clamp (374 aa).

It belongs to the beta sliding clamp family. Forms a ring-shaped head-to-tail homodimer around DNA which binds and tethers DNA polymerases and other proteins to the DNA. The DNA replisome complex has a single clamp-loading complex (3 tau and 1 each of delta, delta', psi and chi subunits) which binds 3 Pol III cores (1 core on the leading strand and 2 on the lagging strand) each with a beta sliding clamp dimer. Additional proteins in the replisome are other copies of gamma, psi and chi, Ssb, DNA helicase and RNA primase.

Its subcellular location is the cytoplasm. Functionally, confers DNA tethering and processivity to DNA polymerases and other proteins. Acts as a clamp, forming a ring around DNA (a reaction catalyzed by the clamp-loading complex) which diffuses in an ATP-independent manner freely and bidirectionally along dsDNA. Initially characterized for its ability to contact the catalytic subunit of DNA polymerase III (Pol III), a complex, multichain enzyme responsible for most of the replicative synthesis in bacteria; Pol III exhibits 3'-5' exonuclease proofreading activity. The beta chain is required for initiation of replication as well as for processivity of DNA replication. The polypeptide is Beta sliding clamp (dnaN) (Helicobacter pylori (strain J99 / ATCC 700824) (Campylobacter pylori J99)).